A 120-amino-acid chain; its full sequence is Large ribosomal subunit protein uL18 (120 aa).

The protein belongs to the universal ribosomal protein uL18 family. In terms of assembly, part of the 50S ribosomal subunit; part of the 5S rRNA/L5/L18/L25 subcomplex. Contacts the 5S and 23S rRNAs.

This is one of the proteins that bind and probably mediate the attachment of the 5S RNA into the large ribosomal subunit, where it forms part of the central protuberance. This is Large ribosomal subunit protein uL18 from Oleidesulfovibrio alaskensis (strain ATCC BAA-1058 / DSM 17464 / G20) (Desulfovibrio alaskensis).